The primary structure comprises 397 residues: Tryptophan synthase beta chain (397 aa).

Lysine 88 carries the post-translational modification N6-(pyridoxal phosphate)lysine.

This sequence belongs to the TrpB family. As to quaternary structure, tetramer of two alpha and two beta chains. Requires pyridoxal 5'-phosphate as cofactor.

The enzyme catalyses (1S,2R)-1-C-(indol-3-yl)glycerol 3-phosphate + L-serine = D-glyceraldehyde 3-phosphate + L-tryptophan + H2O. It functions in the pathway amino-acid biosynthesis; L-tryptophan biosynthesis; L-tryptophan from chorismate: step 5/5. In terms of biological role, the beta subunit is responsible for the synthesis of L-tryptophan from indole and L-serine. This chain is Tryptophan synthase beta chain, found in Haemophilus influenzae (strain 86-028NP).